The following is a 217-amino-acid chain: Deoxyribose-phosphate aldolase 1 (217 aa).

Catalysis depends on Asp-89, which acts as the Proton donor/acceptor. The active-site Schiff-base intermediate with acetaldehyde is Lys-151. The Proton donor/acceptor role is filled by Lys-180.

The protein belongs to the DeoC/FbaB aldolase family. DeoC type 1 subfamily.

It localises to the cytoplasm. The enzyme catalyses 2-deoxy-D-ribose 5-phosphate = D-glyceraldehyde 3-phosphate + acetaldehyde. It participates in carbohydrate degradation; 2-deoxy-D-ribose 1-phosphate degradation; D-glyceraldehyde 3-phosphate and acetaldehyde from 2-deoxy-alpha-D-ribose 1-phosphate: step 2/2. Its function is as follows. Catalyzes a reversible aldol reaction between acetaldehyde and D-glyceraldehyde 3-phosphate to generate 2-deoxy-D-ribose 5-phosphate. The protein is Deoxyribose-phosphate aldolase 1 of Cutibacterium acnes (strain DSM 16379 / KPA171202) (Propionibacterium acnes).